Reading from the N-terminus, the 1347-residue chain is DExH-box ATP-dependent RNA helicase DExH11 (1347 aa).

The tract at residues 263–291 is disordered; that stretch reads ELEGDDHTAGSESPKAEAEPDAKASISNE. Basic and acidic residues predominate over residues 267 to 284; it reads DDHTAGSESPKAEAEPDA. In terms of domain architecture, Helicase ATP-binding spans 369-524; sequence ICCLEKGESV…WIGRTKQKEI (156 aa). An ATP-binding site is contributed by 382 to 389; that stretch reads AHTSAGKT. The short motif at 472-475 is the DEVH box element; that stretch reads DEVH. The tract at residues 566-625 is disordered; it reads SQKKKNSNAVSVAPKQQMGSSAHQDGSKSQKHEAHSRGKQNKHSSVKDVGKSSYSGNSQN. The span at 590 to 601 shows a compositional bias: basic and acidic residues; that stretch reads DGSKSQKHEAHS. In terms of domain architecture, Helicase C-terminal spans 673–838; that stretch reads DLTSSSEKSE…LTYIMILHLL (166 aa).

Belongs to the DExH box helicase family. SKI2 subfamily. Component of the cytoplasmic SKI complex, which consists of SKI2, SKI3 and VIP3/SKI8. In terms of tissue distribution, expressed in vascular tissues of leaves and roots of young plants.

The protein localises to the cytoplasm. It carries out the reaction ATP + H2O = ADP + phosphate + H(+). In terms of biological role, component of the SKI complex which is thought to be involved in exosome-mediated RNA decay and associates with transcriptionally active genes in a manner dependent on PAF1 complex (PAF1C). Involved in the regulation of potassium deprivation stress response. This is DExH-box ATP-dependent RNA helicase DExH11 from Arabidopsis thaliana (Mouse-ear cress).